Consider the following 305-residue polypeptide: tRNA dimethylallyltransferase (305 aa).

Residue 8–15 (GPTGTGKS) coordinates ATP. Residue 10–15 (TGTGKS) coordinates substrate.

Belongs to the IPP transferase family. Monomer. It depends on Mg(2+) as a cofactor.

The catalysed reaction is adenosine(37) in tRNA + dimethylallyl diphosphate = N(6)-dimethylallyladenosine(37) in tRNA + diphosphate. Catalyzes the transfer of a dimethylallyl group onto the adenine at position 37 in tRNAs that read codons beginning with uridine, leading to the formation of N6-(dimethylallyl)adenosine (i(6)A). This Mycobacterium sp. (strain KMS) protein is tRNA dimethylallyltransferase.